The following is a 273-amino-acid chain: MSLILAIYGKGGIGKSTTSANLSAAMALKGAKVLQIGCDPKHDSTFPLTGHLQPTVIDVLDSVNFHLEDVSKEDVIRTGFAGVDTLESGGPPAGSGCGGYVVGETVKLLKEFGLYDKYDVIVFDVLGDVVCGGFSAPLNYADYGLIIACNDFDSIFAANRLCLAISQKSQRHKVKLAGIIANRVDYEYGGGTNLLDQFAEKVGTKVIGRVPYHDLIRRSRLAGKTLFEMEGPGKEECTRPFEEMAEYLLAQPQATVPQPYHDRAIFEAIGGWR.

Residues 12-17 and Lys41 each bind ATP; that span reads GIGKST. Ser16 contributes to the Mg(2+) binding site. [4Fe-4S] cluster is bound by residues Cys97 and Cys131. Residue 182 to 183 participates in ATP binding; it reads NR.

Belongs to the NifH/BchL/ChlL family. Homodimer. Protochlorophyllide reductase is composed of three subunits; BchL, BchN and BchB. Requires [4Fe-4S] cluster as cofactor.

The catalysed reaction is chlorophyllide a + oxidized 2[4Fe-4S]-[ferredoxin] + 2 ADP + 2 phosphate = protochlorophyllide a + reduced 2[4Fe-4S]-[ferredoxin] + 2 ATP + 2 H2O. The protein operates within porphyrin-containing compound metabolism; bacteriochlorophyll biosynthesis (light-independent). Functionally, component of the dark-operative protochlorophyllide reductase (DPOR) that uses Mg-ATP and reduced ferredoxin to reduce ring D of protochlorophyllide (Pchlide) to form chlorophyllide a (Chlide). This reaction is light-independent. The L component serves as a unique electron donor to the NB-component of the complex, and binds Mg-ATP. In Chloroflexus aurantiacus (strain ATCC 29364 / DSM 637 / Y-400-fl), this protein is Light-independent protochlorophyllide reductase iron-sulfur ATP-binding protein.